The primary structure comprises 504 residues: Cytochrome P450 2K1 (504 aa).

Cysteine 447 is a binding site for heme.

The protein belongs to the cytochrome P450 family. The cofactor is heme.

The protein resides in the endoplasmic reticulum membrane. It is found in the microsome membrane. The enzyme catalyses an organic molecule + reduced [NADPH--hemoprotein reductase] + O2 = an alcohol + oxidized [NADPH--hemoprotein reductase] + H2O + H(+). In Oncorhynchus mykiss (Rainbow trout), this protein is Cytochrome P450 2K1 (cyp2k1).